The sequence spans 611 residues: Probable methyltransferase PMT1 (611 aa).

At 1-11 the chain is on the cytoplasmic side; it reads MRGRSEGGKKK. The helical; Signal-anchor for type II membrane protein transmembrane segment at 12 to 32 threads the bilayer; the sequence is PVIVLLCVASVVLVFVYLFFG. The Lumenal portion of the chain corresponds to 33–611; the sequence is SSNHKAIEYG…LTSESLRDLE (579 aa). Residue asparagine 345 is glycosylated (N-linked (GlcNAc...) asparagine).

This sequence belongs to the methyltransferase superfamily.

It localises to the golgi apparatus membrane. The protein is Probable methyltransferase PMT1 of Arabidopsis thaliana (Mouse-ear cress).